The sequence spans 185 residues: Ribosome-recycling factor (185 aa).

The protein belongs to the RRF family.

It is found in the cytoplasm. Functionally, responsible for the release of ribosomes from messenger RNA at the termination of protein biosynthesis. May increase the efficiency of translation by recycling ribosomes from one round of translation to another. The sequence is that of Ribosome-recycling factor from Xylella fastidiosa (strain 9a5c).